The chain runs to 512 residues: Respiratory nitrate reductase 1 beta chain (512 aa).

4Fe-4S ferredoxin-type domains follow at residues 7 to 35 (VGMVLNLDKCIGCHTCSVTCKNVWTSREG), 175 to 206 (TFMMYLPRLCEHCLNPACVATCPSGAIYKREE), and 208 to 237 (GIVLIDQDKCRGWRMCITGCPYKKIYFNWK). 7 residues coordinate [4Fe-4S] cluster: Cys16, Cys19, Cys22, Cys26, Cys184, Cys187, and Cys192. Residues Cys196, Cys217, and Cys223 each contribute to the [3Fe-4S] cluster site. Cys227, Cys244, Cys247, Cys259, and Cys263 together coordinate [4Fe-4S] cluster.

As to quaternary structure, dimer of heterotrimers each composed of an alpha, a beta and a gamma chain. Alpha and beta are catalytic chains; gamma chains are involved in binding the enzyme complex to the cytoplasmic membrane. [4Fe-4S] cluster is required as a cofactor. [3Fe-4S] cluster serves as cofactor.

Its subcellular location is the cell membrane. It catalyses the reaction nitrate + a quinol = a quinone + nitrite + H2O. The nitrate reductase enzyme complex allows E.coli to use nitrate as an electron acceptor during anaerobic growth. The beta chain is an electron transfer unit containing four cysteine clusters involved in the formation of iron-sulfur centers. Electrons are transferred from the gamma chain to the molybdenum cofactor of the alpha subunit. This chain is Respiratory nitrate reductase 1 beta chain (narH), found in Escherichia coli (strain K12).